The primary structure comprises 214 residues: Guanylate kinase (214 aa).

The Guanylate kinase-like domain occupies Gly-12 to Ala-191. Residue Ser-19–Thr-26 participates in ATP binding.

Belongs to the guanylate kinase family.

The protein localises to the cytoplasm. The catalysed reaction is GMP + ATP = GDP + ADP. In terms of biological role, essential for recycling GMP and indirectly, cGMP. In Paramagnetospirillum magneticum (strain ATCC 700264 / AMB-1) (Magnetospirillum magneticum), this protein is Guanylate kinase.